The sequence spans 91 residues: Auxin-responsive protein SAUR20 (91 aa).

The protein belongs to the ARG7 family.

The protein resides in the cell membrane. Its function is as follows. Functions as a positive effector of cell expansion through modulation of auxin transport. The polypeptide is Auxin-responsive protein SAUR20 (Arabidopsis thaliana (Mouse-ear cress)).